Reading from the N-terminus, the 103-residue chain is Serine rich endogenous peptide 9 (103 aa).

The signal sequence occupies residues M1–T25. The tract at residues I54–P103 is disordered. Residues K62–T75 show a composition bias toward basic and acidic residues. Residues E82–S96 carry the SCOOP motif motif. The segment covering G84–P103 has biased composition (low complexity). The SxS motif essential for MIK2 binding signature appears at S88–S90.

This sequence belongs to the serine rich endogenous peptide (SCOOP) phytocytokine family. Interacts with MIK2 (via extracellular leucine-rich repeat domain); this interaction triggers the formation of complex between MIK2 and the BAK1/SERK3 and SERK4 coreceptors, and subsequent BAK1 activation by phosphorylation. As to expression, mostly expressed in seedlings shoots and roots, and, to a lower extent, in leaves, but barely in flowers.

It localises to the cell membrane. The protein resides in the secreted. It is found in the extracellular space. Its subcellular location is the apoplast. In terms of biological role, brassicaceae-specific phytocytokine (plant endogenous peptide released into the apoplast) perceived by MIK2 in a BAK1/SERK3 and SERK4 coreceptors-dependent manner, that modulates various physiological and antimicrobial processes including growth prevention and reactive oxygen species (ROS) response regulation. In Arabidopsis thaliana (Mouse-ear cress), this protein is Serine rich endogenous peptide 9.